Reading from the N-terminus, the 594-residue chain is MADLLSSLKNLSHSSGVYQYFDKNHQLLYIGKAKNLKKRIKSYFSVRNNEITPNYRTSLRIQMMVKQIAFLETILVENEQDALILENSLIKQLKPKYNILLRDDKTYPYIYMDFSTDFPIPLITRKILKQPGVKYFGPFTSGAKDILDSLYELLPLVQKKNCIKDKKACMFYQIERCKAPCENKITKEEYLKIAKECLEMIENKDKLIKELELKMERLSNNLRFEEALIYRDRIAKIQKIAPFTCMDLAKLYDLDIFAFYGKGNKAVLVKMFMRGGKIISSAFEKIHSLNGFDTDEAMKQAIINHYQSHLPLMPEQILLNACSNETLKELQEFISHQYSKKIALSIPKKGDKLALIEIAMKNAQEIFSQEKTSNEDLILEEARSLFKLECMPYRVEIFDTSHHANSQCVGGMVVYENHEFQKNSYRRYHLKGSNEYTQMSELLTRRALDFAKEPPPNLWVIDGGRVQLNIALEILKSSGSFVEVIAISKEKRDSKAYRSKGGAKDIIHTASDTFKLLPSDKRLQWVQKLRDESHRYAINFHRSTKLKNMKQIALLKEKGIGEASVKKLLDYFGSFEAIEKASEQEKNAVLKKRI.

One can recognise a GIY-YIG domain in the interval H13–I99. Positions D205–I240 constitute a UVR domain.

It belongs to the UvrC family. As to quaternary structure, interacts with UvrB in an incision complex.

It is found in the cytoplasm. Its function is as follows. The UvrABC repair system catalyzes the recognition and processing of DNA lesions. UvrC both incises the 5' and 3' sides of the lesion. The N-terminal half is responsible for the 3' incision and the C-terminal half is responsible for the 5' incision. The sequence is that of UvrABC system protein C from Helicobacter pylori (strain Shi470).